The chain runs to 479 residues: NADH-quinone oxidoreductase subunit N 2 (479 aa).

The next 14 membrane-spanning stretches (helical) occupy residues 9–29, 40–60, 75–95, 110–130, 131–151, 164–184, 206–226, 238–258, 272–292, 299–319, 326–346, 371–391, 404–424, and 449–469; these read WALA…LLIV, LLLW…LMLA, RFAV…FFLS, YVLL…IDLL, SIYV…GFLR, VILG…IYGL, LLLA…AVPF, PTTI…AVIL, WIIV…VALV, LLAY…VAGG, VMLY…AVIM, ALLM…AGFF, GFVA…YFYI, and ATLA…AWFL.

The protein belongs to the complex I subunit 2 family. NDH-1 is composed of 14 different subunits. Subunits NuoA, H, J, K, L, M, N constitute the membrane sector of the complex.

The protein localises to the cell inner membrane. The enzyme catalyses a quinone + NADH + 5 H(+)(in) = a quinol + NAD(+) + 4 H(+)(out). Functionally, NDH-1 shuttles electrons from NADH, via FMN and iron-sulfur (Fe-S) centers, to quinones in the respiratory chain. The immediate electron acceptor for the enzyme in this species is believed to be ubiquinone. Couples the redox reaction to proton translocation (for every two electrons transferred, four hydrogen ions are translocated across the cytoplasmic membrane), and thus conserves the redox energy in a proton gradient. The sequence is that of NADH-quinone oxidoreductase subunit N 2 from Rhizobium meliloti (strain 1021) (Ensifer meliloti).